The sequence spans 246 residues: Auxin-responsive protein IAA11 (246 aa).

The EAR-like (transcriptional repression) signature appears at 36 to 40 (LGLTL). Residues 136–235 (SMFVKVTMDG…SVRRLRIMKT (100 aa)) enclose the PB1 domain.

Belongs to the Aux/IAA family. As to quaternary structure, homodimers and heterodimers. Interacts with TPL. As to expression, preferentially expressed in stems and flowers.

The protein resides in the nucleus. Functionally, aux/IAA proteins are short-lived transcriptional factors that function as repressors of early auxin response genes at low auxin concentrations. Repression is thought to result from the interaction with auxin response factors (ARFs), proteins that bind to the auxin-responsive promoter element (AuxRE). Formation of heterodimers with ARF proteins may alter their ability to modulate early auxin response genes expression. The polypeptide is Auxin-responsive protein IAA11 (IAA11) (Arabidopsis thaliana (Mouse-ear cress)).